The primary structure comprises 65 residues: Hirudin-3B' (65 aa).

Positions 1–3 are interaction with thrombin active site; sequence VVY. 3 disulfides stabilise this stretch: Cys6–Cys14, Cys16–Cys28, and Cys22–Cys39. Residues 40–65 are disordered; that stretch reads VTGEGTPKPQSHNDGDFEEIPEEYLQ. The O-linked (GalNAc...) threonine glycan is linked to Thr45. The interaction with fibrinogen-binding exosite of thrombin stretch occupies residues 55–65; it reads DFEEIPEEYLQ. Acidic residues predominate over residues 55 to 65; the sequence is DFEEIPEEYLQ. A Sulfotyrosine modification is found at Tyr63.

The protein belongs to the protease inhibitor I14 (hirudin) family.

It localises to the secreted. In terms of biological role, hirudin is a potent thrombin-specific protease inhibitor. It forms a stable non-covalent complex with alpha-thrombin, thereby abolishing its ability to cleave fibrinogen. This chain is Hirudin-3B', found in Hirudo medicinalis (Medicinal leech).